The chain runs to 197 residues: Ribonuclease HII (197 aa).

One can recognise an RNase H type-2 domain in the interval 9–197 (ELIAGVDEVG…APVKKALEQF (189 aa)). Asp15, Glu16, and Asp107 together coordinate a divalent metal cation.

The protein belongs to the RNase HII family. The cofactor is Mn(2+). Mg(2+) is required as a cofactor.

Its subcellular location is the cytoplasm. The catalysed reaction is Endonucleolytic cleavage to 5'-phosphomonoester.. In terms of biological role, endonuclease that specifically degrades the RNA of RNA-DNA hybrids. This chain is Ribonuclease HII, found in Haemophilus influenzae (strain 86-028NP).